We begin with the raw amino-acid sequence, 465 residues long: Sodium-dependent phosphate transport protein 1 (465 aa).

2 N-linked (GlcNAc...) asparagine glycosylation sites follow: N47 and N56. The next 10 membrane-spanning stretches (helical) occupy residues 79–99 (GIIF…VGYI), 109–129 (IGFA…AAAV), 171–191 (MSLS…GIIC), 198–218 (MVFY…FVLY), 255–275 (AMIK…YLWT), 304–324 (LPYL…DFLM), 337–357 (LFTA…LYLS), 363–383 (TITF…GALI), 399–419 (VTTL…GLFL), and 428–448 (FKIF…YLIF).

Belongs to the major facilitator superfamily. Sodium/anion cotransporter family. In terms of assembly, interacts with PDZK1. In terms of tissue distribution, kidney cortex and liver.

The protein localises to the apical cell membrane. It catalyses the reaction 3 Na(+)(out) + phosphate(out) = 3 Na(+)(in) + phosphate(in). It carries out the reaction urate(out) = urate(in). Its function is as follows. Important for the resorption of phosphate by the kidney. May be involved in actively transporting phosphate into cells via Na(+) cotransport in the renal brush border membrane. Plays a role in urate transport in the kidney. The chain is Sodium-dependent phosphate transport protein 1 (SLC17A1) from Oryctolagus cuniculus (Rabbit).